The following is a 114-amino-acid chain: MSCLKIITLFLFLAAVIASSIANQKGKHRVGAPEQINPNDANLKISLAKAISSQNAGVVVVKITKATRQVVAGFKYVVEFVAKVAGTNKQKVCRTVYIEQAWLKKTSVKNFSCK.

Positions 1–18 (MSCLKIITLFLFLAAVIA) are cleaved as a signal peptide. One can recognise a Cystatin domain in the interval 31 to 109 (GAPEQINPND…QAWLKKTSVK (79 aa)). Cys-93 and Cys-113 are joined by a disulfide.

Belongs to the cystatin family. Expressed by the venom gland (posterior main gland) (at protein level).

The protein localises to the secreted. This chain is Cystatin Pr17a, found in Platymeris rhadamanthus (Red spot assassin bug).